The primary structure comprises 450 residues: Saccharopine dehydrogenase [NADP(+), L-glutamate-forming] (450 aa).

Residues 9–12, 32–34, 54–55, isoleucine 75, 97–98, 124–126, and serine 174 contribute to the NADP(+) site; these read SGFV, CRT, DV, TS, and VDP. Residues 98 to 99 and aspartate 125 contribute to the L-saccharopine site; that span reads SY. L-saccharopine-binding positions include arginine 223 and 244–246; that span reads TLR.

Belongs to the saccharopine dehydrogenase family. As to quaternary structure, homodimer.

The protein localises to the cytoplasm. The enzyme catalyses L-saccharopine + NADP(+) + H2O = (S)-2-amino-6-oxohexanoate + L-glutamate + NADPH + H(+). Its pathway is amino-acid biosynthesis; L-lysine biosynthesis via AAA pathway; L-lysine from L-alpha-aminoadipate (fungal route): step 2/3. This is Saccharopine dehydrogenase [NADP(+), L-glutamate-forming] from Schizosaccharomyces pombe (strain 972 / ATCC 24843) (Fission yeast).